The following is a 333-amino-acid chain: NADH-quinone oxidoreductase subunit H (333 aa).

8 helical membrane passes run 15-35, 88-108, 117-137, 159-179, 191-211, 250-270, 273-293, and 313-333; these read LVIFFGLGLALLFAVLAFVTY, FILAPIIAFAPAFMVLATLPF, IGVGLLYYIAVSGLTTIGVVA, ISYEIPLVVSVLGVVLLTGSL, VWYIFIQPIAFIVFFIAAVAE, LFAMAALTTILFLGGWHPVMF, FIPGAVWFALKFSIVVFVLIW, and VLFPVALLNIFVTALIQELFF.

Belongs to the complex I subunit 1 family. As to quaternary structure, NDH-1 is composed of 14 different subunits. Subunits NuoA, H, J, K, L, M, N constitute the membrane sector of the complex.

It is found in the cell membrane. It catalyses the reaction a quinone + NADH + 5 H(+)(in) = a quinol + NAD(+) + 4 H(+)(out). NDH-1 shuttles electrons from NADH, via FMN and iron-sulfur (Fe-S) centers, to quinones in the respiratory chain. The immediate electron acceptor for the enzyme in this species is believed to be ubiquinone. Couples the redox reaction to proton translocation (for every two electrons transferred, four hydrogen ions are translocated across the cytoplasmic membrane), and thus conserves the redox energy in a proton gradient. This subunit may bind ubiquinone. In Geobacillus sp. (strain WCH70), this protein is NADH-quinone oxidoreductase subunit H.